Here is a 66-residue protein sequence, read N- to C-terminus: Disk-determining factor A (66 aa).

Involved in cell-shape determination. Required for the formation of disks. The polypeptide is Disk-determining factor A (Haloferax volcanii (strain ATCC 29605 / DSM 3757 / JCM 8879 / NBRC 14742 / NCIMB 2012 / VKM B-1768 / DS2) (Halobacterium volcanii)).